The chain runs to 257 residues: Phosphate import ATP-binding protein PstB (257 aa).

The 242-residue stretch at 5 to 246 (LEIKDLTAFY…EVIFTSPKNE (242 aa)) folds into the ABC transporter domain. 37–44 (GPSGCGKS) provides a ligand contact to ATP.

Belongs to the ABC transporter superfamily. Phosphate importer (TC 3.A.1.7) family. In terms of assembly, the complex is composed of two ATP-binding proteins (PstB), two transmembrane proteins (PstC and PstA) and a solute-binding protein (PstS).

The protein resides in the cell membrane. It catalyses the reaction phosphate(out) + ATP + H2O = ADP + 2 phosphate(in) + H(+). Part of the ABC transporter complex PstSACB involved in phosphate import. Responsible for energy coupling to the transport system. The polypeptide is Phosphate import ATP-binding protein PstB (Tropheryma whipplei (strain Twist) (Whipple's bacillus)).